The primary structure comprises 186 residues: ADP-ribosylation factor-like protein 8A (186 aa).

Positions M1–E19 form an intramembrane region, note=Mediates targeting to membranes. GTP is bound by residues Q29–T35, D71–Q75, and N130–D133.

It belongs to the small GTPase superfamily. Arf family.

The protein resides in the late endosome membrane. Its subcellular location is the lysosome membrane. In terms of biological role, may play a role in lysosomes motility. Alternatively, may play a role in chromosome segregation. The chain is ADP-ribosylation factor-like protein 8A (arl8a) from Xenopus tropicalis (Western clawed frog).